A 102-amino-acid polypeptide reads, in one-letter code: Chorion protein S15 (102 aa).

The first 18 residues, 1 to 18, serve as a signal peptide directing secretion; that stretch reads MKFLIAFVAIAFFACVSA.

Belongs to the chorion protein S15/S18 family.

Its subcellular location is the secreted. Chorion membrane (egg shell) protein; plays a role in protecting the egg from the environment. The chain is Chorion protein S15 (Cp15) from Drosophila grimshawi (Hawaiian fruit fly).